The following is a 366-amino-acid chain: Spermidine/putrescine import ATP-binding protein PotA (366 aa).

In terms of domain architecture, ABC transporter spans isoleucine 8 to isoleucine 239. Glycine 41–threonine 48 contributes to the ATP binding site.

Belongs to the ABC transporter superfamily. Spermidine/putrescine importer (TC 3.A.1.11.1) family. In terms of assembly, the complex is composed of two ATP-binding proteins (PotA), two transmembrane proteins (PotB and PotC) and a solute-binding protein (PotD).

Its subcellular location is the cell membrane. It carries out the reaction ATP + H2O + polyamine-[polyamine-binding protein]Side 1 = ADP + phosphate + polyamineSide 2 + [polyamine-binding protein]Side 1.. Functionally, part of the ABC transporter complex PotABCD involved in spermidine/putrescine import. Responsible for energy coupling to the transport system. In Listeria innocua serovar 6a (strain ATCC BAA-680 / CLIP 11262), this protein is Spermidine/putrescine import ATP-binding protein PotA.